Consider the following 210-residue polypeptide: MQVKNPILGLCQKAKFALSAAKVEQCPDDQGYEVAFAGRSNAGKSSALNTLTHASLARTSKTPGRTQLLNFFSLDDERRLVDLPGYGYAKVPIPLKQHWQKHLEAYLGSRECLRGVILMMDVRHPMTDFDKMMLDWAKASSMPMHILLTKADKLTHGAGKNTLLKVQSEIRKGWGDGVTIQLFSAPKRLGVEDAYRVLADWMELEDKPVI.

One can recognise an EngB-type G domain in the interval 30 to 204 (QGYEVAFAGR…YRVLADWMEL (175 aa)). Residues 38 to 45 (GRSNAGKS), 64 to 68 (GRTQL), 82 to 85 (DLPG), 149 to 152 (TKAD), and 182 to 185 (LFSA) each bind GTP. Residues S45 and T66 each contribute to the Mg(2+) site.

This sequence belongs to the TRAFAC class TrmE-Era-EngA-EngB-Septin-like GTPase superfamily. EngB GTPase family. Mg(2+) is required as a cofactor.

In terms of biological role, necessary for normal cell division and for the maintenance of normal septation. In Pseudomonas putida (strain ATCC 700007 / DSM 6899 / JCM 31910 / BCRC 17059 / LMG 24140 / F1), this protein is Probable GTP-binding protein EngB.